We begin with the raw amino-acid sequence, 228 residues long: Phosphoribosylformylglycinamidine synthase subunit PurQ (228 aa).

The 224-residue stretch at 3-226 (FAVIVFPGSN…VKYWRETHVV (224 aa)) folds into the Glutamine amidotransferase type-1 domain. The active-site Nucleophile is cysteine 86. Active-site residues include histidine 195 and glutamate 197.

As to quaternary structure, part of the FGAM synthase complex composed of 1 PurL, 1 PurQ and 2 PurS subunits.

It is found in the cytoplasm. It carries out the reaction N(2)-formyl-N(1)-(5-phospho-beta-D-ribosyl)glycinamide + L-glutamine + ATP + H2O = 2-formamido-N(1)-(5-O-phospho-beta-D-ribosyl)acetamidine + L-glutamate + ADP + phosphate + H(+). The catalysed reaction is L-glutamine + H2O = L-glutamate + NH4(+). Its pathway is purine metabolism; IMP biosynthesis via de novo pathway; 5-amino-1-(5-phospho-D-ribosyl)imidazole from N(2)-formyl-N(1)-(5-phospho-D-ribosyl)glycinamide: step 1/2. Functionally, part of the phosphoribosylformylglycinamidine synthase complex involved in the purines biosynthetic pathway. Catalyzes the ATP-dependent conversion of formylglycinamide ribonucleotide (FGAR) and glutamine to yield formylglycinamidine ribonucleotide (FGAM) and glutamate. The FGAM synthase complex is composed of three subunits. PurQ produces an ammonia molecule by converting glutamine to glutamate. PurL transfers the ammonia molecule to FGAR to form FGAM in an ATP-dependent manner. PurS interacts with PurQ and PurL and is thought to assist in the transfer of the ammonia molecule from PurQ to PurL. The protein is Phosphoribosylformylglycinamidine synthase subunit PurQ of Geobacillus sp. (strain WCH70).